Reading from the N-terminus, the 810-residue chain is Protein kinase C-binding protein NELL1 (810 aa).

The first 21 residues, 1-21 (MPMDVILVLWFCVCTARTVLG), serve as a signal peptide directing secretion. N-linked (GlcNAc...) asparagine glycosylation is found at Asn40, Asn53, Asn83, Asn224, Asn294, and Asn372. In terms of domain architecture, Laminin G-like spans 57–227 (AFLFQDVQRE…TQCPNLNRTC (171 aa)). The 62-residue stretch at 271–332 (KTCQVSGLLY…ISGQCCKVCR (62 aa)) folds into the VWFC 1 domain. 3 disulfide bridges follow: Cys395-Cys407, Cys401-Cys416, and Cys418-Cys432. Asp434, Ile435, and Glu437 together coordinate Ca(2+). In terms of domain architecture, EGF-like 1; calcium-binding spans 434 to 475 (DIDECAAKMHYCHANTVCVNLPGLYRCDCIPGYIRVDDFSCT). Intrachain disulfides connect Cys438–Cys451, Cys445–Cys460, Cys462–Cys474, Cys480–Cys493, Cys487–Cys502, Cys504–Cys515, Cys519–Cys529, Cys523–Cys535, Cys537–Cys546, Cys553–Cys566, Cys560–Cys575, Cys577–Cys594, Cys600–Cys613, Cys607–Cys622, and Cys624–Cys630. Asn453, Leu454, and Leu457 together coordinate Ca(2+). The 41-residue stretch at 476 to 516 (EHDDCGSGQHNCDKNAICTNTVQGHSCTCQPGYVGNGTVCK) folds into the EGF-like 2; calcium-binding domain. N-linked (GlcNAc...) asparagine glycosylation occurs at Asn511. An EGF-like 3 domain is found at 517 to 547 (AFCEEGCRYGGTCVAPNKCVCPSGFTGSHCE). The region spanning 549–587 (DIDECAEGFVECHNHSRCVNLPGWYHCECRSGFHDDGTY) is the EGF-like 4; calcium-binding domain. N-linked (GlcNAc...) asparagine glycosylation occurs at Asn562. The region spanning 596 to 631 (DIDECALRTHTCWNDSACINLAGGFDCLCPSGPSCS) is the EGF-like 5; calcium-binding domain. N-linked (GlcNAc...) asparagine glycosylation occurs at Asn609. 2 consecutive VWFC domains span residues 632-687 (GDCP…PECD) and 692-750 (SQCL…PRCV). An N-linked (GlcNAc...) asparagine glycan is attached at Asn708.

As to quaternary structure, homotrimer. Binds to PKC beta-1. Interacts with ATRAID; the interaction promotes osteoblast cell differentiation and mineralization. Interacts with ROBO3.

The protein localises to the cytoplasm. Its subcellular location is the nucleus envelope. It localises to the secreted. Plays a role in the control of cell growth and differentiation. Promotes osteoblast cell differentiation and terminal mineralization. The sequence is that of Protein kinase C-binding protein NELL1 (Nell1) from Mus musculus (Mouse).